Here is a 94-residue protein sequence, read N- to C-terminus: Myosuppressin (94 aa).

Residues M1–G24 form the signal peptide. Positions A25 to R80 are excised as a propeptide. Position 81 is a pyrrolidone carboxylic acid (Q81). F90 is modified (phenylalanine amide).

Expressed throughout the nervous system (at protein level).

It is found in the secreted. Functionally, myoinhibiting neuropeptide. The chain is Myosuppressin from Camponotus floridanus (Florida carpenter ant).